The following is a 302-amino-acid chain: uncharacterized protein (302 aa).

The next 10 helical transmembrane spans lie at G13–K32, I42–W64, F77–W96, A106–L125, L132–V150, V154–L171, L183–A202, N217–A239, L246–Y265, and I275–A297. Positions T22–V149 constitute an EamA domain.

The protein belongs to the EamA transporter family.

The protein resides in the cell membrane. This is an uncharacterized protein from Vibrio cholerae serotype O1 (strain ATCC 39315 / El Tor Inaba N16961).